We begin with the raw amino-acid sequence, 51 residues long: Large ribosomal subunit protein eL39 (51 aa).

This sequence belongs to the eukaryotic ribosomal protein eL39 family.

The chain is Large ribosomal subunit protein eL39 (rpl39e) from Pyrococcus horikoshii (strain ATCC 700860 / DSM 12428 / JCM 9974 / NBRC 100139 / OT-3).